The primary structure comprises 827 residues: Glycerol-3-phosphate acyltransferase (827 aa).

Residues 325–330 (CHRSHM) carry the HXXXXD motif motif.

Belongs to the GPAT/DAPAT family.

It localises to the cell inner membrane. It carries out the reaction sn-glycerol 3-phosphate + an acyl-CoA = a 1-acyl-sn-glycero-3-phosphate + CoA. The protein operates within phospholipid metabolism; CDP-diacylglycerol biosynthesis; CDP-diacylglycerol from sn-glycerol 3-phosphate: step 1/3. This chain is Glycerol-3-phosphate acyltransferase, found in Shigella boydii serotype 4 (strain Sb227).